A 195-amino-acid polypeptide reads, in one-letter code: Imidazoleglycerol-phosphate dehydratase (195 aa).

It belongs to the imidazoleglycerol-phosphate dehydratase family.

It is found in the cytoplasm. The catalysed reaction is D-erythro-1-(imidazol-4-yl)glycerol 3-phosphate = 3-(imidazol-4-yl)-2-oxopropyl phosphate + H2O. It participates in amino-acid biosynthesis; L-histidine biosynthesis; L-histidine from 5-phospho-alpha-D-ribose 1-diphosphate: step 6/9. This chain is Imidazoleglycerol-phosphate dehydratase, found in Leuconostoc mesenteroides subsp. mesenteroides (strain ATCC 8293 / DSM 20343 / BCRC 11652 / CCM 1803 / JCM 6124 / NCDO 523 / NBRC 100496 / NCIMB 8023 / NCTC 12954 / NRRL B-1118 / 37Y).